Here is a 95-residue protein sequence, read N- to C-terminus: Small ribosomal subunit protein uS17 (95 aa).

Belongs to the universal ribosomal protein uS17 family. Part of the 30S ribosomal subunit.

Functionally, one of the primary rRNA binding proteins, it binds specifically to the 5'-end of 16S ribosomal RNA. In Mesomycoplasma hyopneumoniae (strain 7448) (Mycoplasma hyopneumoniae), this protein is Small ribosomal subunit protein uS17.